Consider the following 350-residue polypeptide: Solute carrier family 35 member E4 (350 aa).

8 consecutive transmembrane segments (helical) span residues 40-60 (VLGQ…LLAG), 79-99 (PLLL…WGAQ), 110-130 (VLLL…GLST), 135-155 (LAQL…ALLL), 218-238 (VTLL…AALV), 258-278 (VLLS…LLAL), 279-299 (TSAL…LILS), and 301-321 (LLFG…TLSG). An EamA domain is found at 125 to 179 (NVGLSTVPLDLAQLATTTTPLFTLALSALLLGRRHHPLQFAAMGPLCLGAACSLA).

Belongs to the TPT transporter family. SLC35E subfamily.

The protein localises to the membrane. Its function is as follows. Putative transporter. In Rattus norvegicus (Rat), this protein is Solute carrier family 35 member E4 (Slc35e4).